A 222-amino-acid chain; its full sequence is Ras-related protein Rab-41 (222 aa).

The GTP site is built by S41, V42, G43, K44, T45, S46, and T63. T45 lines the Mg(2+) pocket. Residues 58–66 (CACQATVGI) are switch-I. The Mg(2+) site is built by T63 and D86. The GTP site is built by G89, N144, K145, D147, S174, A175, and K176. Residues 89–105 (GQERFHSLIPSYIRDST) form a switch-II region. C222 carries the S-geranylgeranyl cysteine lipid modification.

This sequence belongs to the small GTPase superfamily. Rab family. Requires Mg(2+) as cofactor. As to expression, widely expressed in brain, testis, lung, heart, ovary, colon, kidney, uterus and spleen but not in liver.

The protein resides in the cytoplasm. The catalysed reaction is GTP + H2O = GDP + phosphate + H(+). With respect to regulation, regulated by guanine nucleotide exchange factors (GEFs) which promote the exchange of bound GDP for free GTP. Regulated by GTPase activating proteins (GAPs) which increase the GTP hydrolysis activity. Inhibited by GDP dissociation inhibitors (GDIs). Its function is as follows. The small GTPases Rab are key regulators of intracellular membrane trafficking, from the formation of transport vesicles to their fusion with membranes. Rabs cycle between an inactive GDP-bound form and an active GTP-bound form that is able to recruit to membranes different sets of downstream effectors directly responsible for vesicle formation, movement, tethering and fusion. RAB41 is required for normal Golgi ribbon organization and ER-to-Golgi trafficking. This is Ras-related protein Rab-41 from Homo sapiens (Human).